The chain runs to 437 residues: Adenylosuccinate synthetase (437 aa).

GTP-binding positions include 12–18 (GDEGKGK) and 40–42 (GHT). Asp-13 acts as the Proton acceptor in catalysis. Mg(2+)-binding residues include Asp-13 and Gly-40. Residues 13 to 16 (DEGK), 38 to 41 (NAGH), Thr-128, Arg-142, Gln-223, Thr-238, and Arg-302 each bind IMP. The Proton donor role is filled by His-41. Position 298-304 (298-304 (TTTGRRR)) interacts with substrate. GTP contacts are provided by residues Arg-304, 330–332 (KLD), and 412–414 (SLG).

Belongs to the adenylosuccinate synthetase family. Homodimer. It depends on Mg(2+) as a cofactor.

The protein localises to the cytoplasm. It catalyses the reaction IMP + L-aspartate + GTP = N(6)-(1,2-dicarboxyethyl)-AMP + GDP + phosphate + 2 H(+). The protein operates within purine metabolism; AMP biosynthesis via de novo pathway; AMP from IMP: step 1/2. Functionally, plays an important role in the de novo pathway of purine nucleotide biosynthesis. Catalyzes the first committed step in the biosynthesis of AMP from IMP. This is Adenylosuccinate synthetase from Prochlorococcus marinus (strain NATL1A).